Here is a 393-residue protein sequence, read N- to C-terminus: NAD(P)H-quinone oxidoreductase subunit H, chloroplastic (393 aa).

This sequence belongs to the complex I 49 kDa subunit family. As to quaternary structure, NDH is composed of at least 16 different subunits, 5 of which are encoded in the nucleus.

It is found in the plastid. The protein resides in the chloroplast thylakoid membrane. It catalyses the reaction a plastoquinone + NADH + (n+1) H(+)(in) = a plastoquinol + NAD(+) + n H(+)(out). The catalysed reaction is a plastoquinone + NADPH + (n+1) H(+)(in) = a plastoquinol + NADP(+) + n H(+)(out). NDH shuttles electrons from NAD(P)H:plastoquinone, via FMN and iron-sulfur (Fe-S) centers, to quinones in the photosynthetic chain and possibly in a chloroplast respiratory chain. The immediate electron acceptor for the enzyme in this species is believed to be plastoquinone. Couples the redox reaction to proton translocation, and thus conserves the redox energy in a proton gradient. The polypeptide is NAD(P)H-quinone oxidoreductase subunit H, chloroplastic (Manihot esculenta (Cassava)).